The primary structure comprises 1522 residues: Paired amphipathic helix protein pst1 (1522 aa).

Positions 139–174 are disordered; it reads TILSSTDSNIPRPGTVKSSASPFVPNQNPSAPPPPP. Residues 178 to 248 enclose the PAH 1 domain; that stretch reads RQLNVTDALS…QGFNTFLPPG (71 aa). The segment at 307–339 is disordered; the sequence is QSSASHPVLQPPAPSTLQFNPSPSPAAPSYPPV. Residues 328–337 are compositionally biased toward pro residues; that stretch reads SPSPAAPSYP. Residues 345 to 415 form the PAH 2 domain; it reads QAADLDQAIN…EEFKRFLPDV (71 aa). 3 disordered regions span residues 422–504, 928–968, and 1343–1522; these read ETQD…AFNV, AREN…DESS, and SGKA…KDDL. The segment covering 426 to 441 has biased composition (polar residues); the sequence is KSTVVPQESATATPKR. Ser-442 carries the post-translational modification Phosphoserine. Residues 442 to 468 show a composition bias toward low complexity; the sequence is SPSATPTSALPPIGKFAPPTTAKAQPA. Thr-446 carries the phosphothreonine modification. Residues 504–576 enclose the PAH 3 domain; that stretch reads VPIAQNKNPS…NWLKDLVKYN (73 aa). Basic and acidic residues predominate over residues 928 to 960; sequence ARENRSSVKEDYVSESTERTPDASEIDEHISEH. The span at 1385–1398 shows a compositional bias: polar residues; the sequence is GKSSVTRGNKTNLK. The segment covering 1403–1432 has biased composition (basic and acidic residues); the sequence is RNNDDSSNKINLSEKEKEKESIEDEEKNRE. Ser-1443 carries the post-translational modification Phosphoserine. Residues 1461–1474 are compositionally biased toward basic and acidic residues; sequence TSSHRPERSSEKKS. Residues 1478–1487 show a composition bias toward polar residues; that stretch reads VFTSVKQTAE. Acidic residues predominate over residues 1488–1522; the sequence is NDADNEDDKTDMDDQTEETLDADNTMEEEPSKDDL.

The protein localises to the nucleus. Has a role in modulating the nuclear import of TF1 virus-like particles. Essential for viability. The protein is Paired amphipathic helix protein pst1 (pst1) of Schizosaccharomyces pombe (strain 972 / ATCC 24843) (Fission yeast).